Reading from the N-terminus, the 326-residue chain is DNA-directed RNA polymerase subunit alpha (326 aa).

An alpha N-terminal domain (alpha-NTD) region spans residues 1–231 (MQTALLKPKI…DQLSVFAALE (231 aa)). Residues 247 to 326 (IDPILLRPVD…ENWPPAGLEK (80 aa)) form an alpha C-terminal domain (alpha-CTD) region.

Belongs to the RNA polymerase alpha chain family. Homodimer. The RNAP catalytic core consists of 2 alpha, 1 beta, 1 beta' and 1 omega subunit. When a sigma factor is associated with the core the holoenzyme is formed, which can initiate transcription.

The enzyme catalyses RNA(n) + a ribonucleoside 5'-triphosphate = RNA(n+1) + diphosphate. In terms of biological role, DNA-dependent RNA polymerase catalyzes the transcription of DNA into RNA using the four ribonucleoside triphosphates as substrates. The chain is DNA-directed RNA polymerase subunit alpha from Cupriavidus metallidurans (strain ATCC 43123 / DSM 2839 / NBRC 102507 / CH34) (Ralstonia metallidurans).